The following is a 569-amino-acid chain: Matrix metalloproteinase-21 (569 aa).

An N-terminal signal peptide occupies residues 1–24 (MLAASIFRPTLLLCWLAAPWPTQP). A propeptide spanning residues 25–144 (ESLFHSRDRS…GPPPRARSRR (120 aa)) is cleaved from the precursor. A Cysteine switch motif is present at residues 115-122 (PRCGVPDM). The disordered stretch occupies residues 115–166 (PRCGVPDMRPPPPSAPPSPPGPPPRARSRRSPRAPLSLSRRGWQPRGYPDGG). Cys117 contacts Zn(2+). A compositionally biased stretch (pro residues) spans 122–139 (MRPPPPSAPPSPPGPPPR). The span at 147–156 (RAPLSLSRRG) shows a compositional bias: low complexity. His283 lines the Zn(2+) pocket. Residue Glu284 is part of the active site. Zn(2+) contacts are provided by His287 and His293. A disulfide bridge links Cys329 with Cys560. 4 Hemopexin repeats span residues 330-389 (EGSF…WPGI), 391-447 (THNI…FPGI), 448-496 (PSPL…FPAV), and 503-559 (FRNI…WFDV). A glycan (N-linked (GlcNAc...) asparagine) is linked at Asn372.

The protein belongs to the peptidase M10A family. The cofactor is Zn(2+). It depends on Ca(2+) as a cofactor. The precursor is cleaved by a furin endopeptidase. Identified in fetal brain, kidney and liver. In adult tissues found primarily in ovary, kidney, liver, lung, placenta, brain and peripheral blood leukocytes. Expressed as well in various cancer cell lines.

It is found in the secreted. Plays a specialized role in the generation of left-right asymmetry during embryogenesis. May act as a negative regulator of the NOTCH-signaling pathway. Cleaves alpha-1-antitrypsin. The chain is Matrix metalloproteinase-21 (MMP21) from Homo sapiens (Human).